A 755-amino-acid chain; its full sequence is MTERNIYSVSAEIAGRTLTLEAGRFAEQADGAVVARYGDTMLLATVVCAKEAREGTDFFPLTVDYEEKMYAVGKIPGNFFKREGRPTTTAILISRLTDRPLRPLFPKGFYNEVQVIITTFSIDMENDPGPLAIIAASAALCISDIPFAGPVGAVQMGHLNGQLVVNPKMNEIADSRLDLVVAGTKDAVLMVEAGAYELTEDEMLQAVIDGHAVCKQICDLQEQLVQLCGKPKRPFTPPVVDTSLEEAISAWMGDRLRKAVRSPIKQEREAQTEALKAEVIAHFTADEPEEEIANRTKEVTKAFEKLLKDEVRNAILDEGIRVDGRALDEIRPISIEVGVIPRVHGSAVFTRGQTQVLTITTLGSPGDEQKVDDLGIETSKRYIHHYNFPPFSTGEVRRIGTPRRRDIGHGALAERSLYAVLPDEKDFPYTIRLVSEVLSSNGSSSMASVCGSSLSLMDAGVPIKAPVAGVAMGLITGEDGRWRVLTDIQGLEDALGDMDFKVAGTAKGVTGLQMDIKTTGITYEIMREAFAQARAGRLFILDKMNEVISAPRPELSIYAPRIMTIQIPVDKIGALIGPGGKTIRNICETTGAQIDIEDDGRVFITTPDGAAARQAISMIEGLTREAKVGDIFLGKVVSIKPFGAFVNILPGKDGMVHVSELDEKRVENVEDVVSLGDEINVMVIDIDRTTGKISLSRRAVLTGETPEERKAAGAAPRPRPREEQRGGRDEPRSLRDELRGPRREGDRPRPRRRDD.

Residues Asp493 and Asp499 each coordinate Mg(2+). In terms of domain architecture, KH spans 560–619 (PRIMTIQIPVDKIGALIGPGGKTIRNICETTGAQIDIEDDGRVFITTPDGAAARQAISMI). The region spanning 629 to 698 (GDIFLGKVVS…TTGKISLSRR (70 aa)) is the S1 motif domain. The tract at residues 699–755 (AVLTGETPEERKAAGAAPRPRPREEQRGGRDEPRSLRDELRGPRREGDRPRPRRRDD) is disordered. Residues 719-755 (RPREEQRGGRDEPRSLRDELRGPRREGDRPRPRRRDD) are compositionally biased toward basic and acidic residues.

Belongs to the polyribonucleotide nucleotidyltransferase family. Mg(2+) is required as a cofactor.

The protein localises to the cytoplasm. It carries out the reaction RNA(n+1) + phosphate = RNA(n) + a ribonucleoside 5'-diphosphate. Functionally, involved in mRNA degradation. Catalyzes the phosphorolysis of single-stranded polyribonucleotides processively in the 3'- to 5'-direction. This is Polyribonucleotide nucleotidyltransferase from Chloroflexus aurantiacus (strain ATCC 29366 / DSM 635 / J-10-fl).